Consider the following 166-residue polypeptide: Urease accessory protein UreE (166 aa).

The tract at residues 132 to 156 is disordered; it reads FQPEHGAYGGGHHHSRHGDEDFNYP.

It belongs to the UreE family.

It is found in the cytoplasm. Involved in urease metallocenter assembly. Binds nickel. Probably functions as a nickel donor during metallocenter assembly. This is Urease accessory protein UreE from Pseudomonas fluorescens (strain ATCC BAA-477 / NRRL B-23932 / Pf-5).